We begin with the raw amino-acid sequence, 586 residues long: MTITKLAWRDLVPDTDSYQEIFAQPHLIDENDPLFSDTQPRLQFALEQLLHTRASSSFMLAKAPEESEYLNLIANAARTLQSDAGQLVGGHYEVSGHSIRLRHAVSADDNFATLTQVVAADWVEAEQLFGCLRQFNGDITLQPGLVHQANGGILIISLRTLLAQPLLWMRLKNIVNRERFDWVAFDESRPLPVSVPSMPLKLKVILVGERESLADFQEMEPELSEQAIYSEFEDTLQIVDAESVTQWCRWVTFTARHNHLPAPGADAWPILIREAARYTGEQETLPLSPQWILRQCKEVASLCDGDTFSGEQLNLMLQQREWREGFLAERMQDEILQEQILIETEGERIGQINALSVIEFPGHPRAFGEPSRISCVVHIGDGEFTDIERKAELGGNIHAKGMMIMQAFLMSELQLEQQIPFSASLTFEQSYSEVDGDSASMAELCALISALADVPVNQSIAITGSVDQFGRAQPVGGLNEKIEGFFAICQQRELTGKQGVIIPTANVRHLSLHSELVKAVEEGKFTIWAVDDVTDALPLLLNLVWDGEGQTTLMQTIQERIAQASQQEGRHRFPWPLRWLNWFIPN.

Residues 346–543 enclose the Lon proteolytic domain; the sequence is GERIGQINAL…TDALPLLLNL (198 aa). Catalysis depends on residues serine 438 and lysine 481.

The protein belongs to the peptidase S16 family.

The chain is Putative Lon protease homolog (ycbZ) from Escherichia coli (strain K12).